The chain runs to 146 residues: Hemoglobin subunit beta (146 aa).

At Val-1 the chain carries N-acetylvaline. One can recognise a Globin domain in the interval 2–146 (HLTGEEKSAV…VANALAHKYH (145 aa)). Residue Thr-12 is modified to Phosphothreonine. Phosphoserine is present on Ser-44. Residue Lys-59 is modified to N6-acetyllysine. His-63 is a binding site for heme b. N6-acetyllysine is present on Lys-82. Position 92 (His-92) interacts with heme b. Cys-93 is modified (S-nitrosocysteine). N6-acetyllysine is present on Lys-144.

Belongs to the globin family. As to quaternary structure, heterotetramer of two alpha chains and two beta chains. As to expression, red blood cells.

Involved in oxygen transport from the lung to the various peripheral tissues. The sequence is that of Hemoglobin subunit beta (HBB) from Saguinus mystax (Moustached tamarin).